The following is a 245-amino-acid chain: tRNA1(Val) (adenine(37)-N6)-methyltransferase (245 aa).

It belongs to the methyltransferase superfamily. tRNA (adenine-N(6)-)-methyltransferase family.

It localises to the cytoplasm. The catalysed reaction is adenosine(37) in tRNA1(Val) + S-adenosyl-L-methionine = N(6)-methyladenosine(37) in tRNA1(Val) + S-adenosyl-L-homocysteine + H(+). Its function is as follows. Specifically methylates the adenine in position 37 of tRNA(1)(Val) (anticodon cmo5UAC). This is tRNA1(Val) (adenine(37)-N6)-methyltransferase from Escherichia coli (strain UTI89 / UPEC).